We begin with the raw amino-acid sequence, 570 residues long: Fibropellin-3 (570 aa).

Residues 1–17 (MKVSLLAVLLLSIVAAT) form the signal peptide. An EGF-like 1 domain is found at 18-55 (YGQGECGSNPCENGSVCRDGEGTYICECQMGYDGQNCD). 4 cysteine pairs are disulfide-bonded: Cys-23/Cys-34, Cys-28/Cys-43, Cys-45/Cys-54, and Cys-62/Cys-88. Asn-30 is a glycosylation site (N-linked (GlcNAc...) asparagine). A CUB domain is found at 62–175 (CGYNIFESTG…RKGFRITFSS (114 aa)). Asn-136 carries an N-linked (GlcNAc...) asparagine glycan. The EGF-like 2; calcium-binding domain occupies 176 to 212 (DGDDCTPNPCLNGATCVDQVNDYQCICAPGFTGDNCE). Cystine bridges form between Cys-180–Cys-191, Cys-185–Cys-200, Cys-202–Cys-211, Cys-218–Cys-229, Cys-223–Cys-238, Cys-240–Cys-249, Cys-256–Cys-267, Cys-261–Cys-276, Cys-278–Cys-287, Cys-294–Cys-305, Cys-299–Cys-314, Cys-316–Cys-325, Cys-332–Cys-343, Cys-337–Cys-352, Cys-354–Cys-363, Cys-370–Cys-381, Cys-375–Cys-390, Cys-392–Cys-401, Cys-408–Cys-419, Cys-413–Cys-428, Cys-430–Cys-439, and Cys-445–Cys-521. The region spanning 214–250 (DIDECASAPCRNGGACVDQVNGYTCNCIPGFNGVNCE) is the EGF-like 3; calcium-binding domain. The region spanning 252 to 288 (NINECASIPCLNGGICVDGINQFACTCLPGYTGILCE) is the EGF-like 4; calcium-binding domain. The EGF-like 5; calcium-binding domain occupies 290-326 (DINECASSPCQNGGSCTDAVNRYTCDCRAGFTGSNCE). The region spanning 328 to 364 (NINECASSPCLNGGSCLDGVDGYVCQCLPNYTGTHCE) is the EGF-like 6; calcium-binding domain. N-linked (GlcNAc...) asparagine glycosylation is present at Asn-357. Positions 366–402 (SLDACASLPCQNGGVCTNVGGDYVCECLPGYTGINCE) constitute an EGF-like 7 domain. The 37-residue stretch at 404–440 (DINECASLPCQNGGECINGIAMYICQCRQGYAGVNCE) folds into the EGF-like 8; calcium-binding domain. The 120-residue stretch at 443–562 (GFCDLEGVWF…GQDKWTRYEQ (120 aa)) folds into the Avidin-like domain.

In terms of assembly, homotetramer.

The protein localises to the secreted. Its subcellular location is the extracellular space. In terms of biological role, forms the apical lamina, a component of the extracellular matrix. This is Fibropellin-3 (EGF3) from Strongylocentrotus purpuratus (Purple sea urchin).